A 103-amino-acid chain; its full sequence is MEKIRLKLKAYDHRVLDRSVAAIVDAVKRTGAEIRGPIPMPTKMKRYTVLKSPHVNKDAREQFEIRIHGRMIDIVSATSDTIDSLMKLDLAPEIEVEIRSMDK.

Belongs to the universal ribosomal protein uS10 family. In terms of assembly, part of the 30S ribosomal subunit.

Its function is as follows. Involved in the binding of tRNA to the ribosomes. In Sulfurovum sp. (strain NBC37-1), this protein is Small ribosomal subunit protein uS10.